The following is a 641-amino-acid chain: MATAAGMGIGAACLVAPQVRPGRRLRLQRVRRRCVAELSRDGGSAQRPLAPAPLVKQPVLPTFLVPTSTPPAPTQSPAPAPTPPPLPDSGVGEIEPDLEGLTEDSIDKTIFVASEQESEIMDVKEQAQAKVTRSVVFVTGEASPYAKSGGLGDVCGSLPIALALRGHRVMVVMPRYMNGALNKNFANAFYTEKHIKIPCFGGEHEVTFFHEYRDSVDWVFVDHPSYHRPGNLYGDNFGAFGDNQFRYTLLCYAACEAPLILELGGYIYGQKCMFVVNDWHASLVPVLLAAKYRPYGVYRDARSVLVIHNLAHQGVEPASTYPDLGLPPEWYGALEWVFPEWARRHALDKGEAVNFLKGAVVTADRIVTVSQGYSWEVTTAEGGQGLNELLSSRKSVLNGIVNGIDINDWNPSTDKFLPYHYSVDDLSGKAKCKAELQEELGLPIRPDVPLIGFIGRLDYQKGIDLIKLAIPDLMRDNIQFVMLGSGDPGFEGWMRSTESGYRDKFRGWVGFSVPVSHRITAGCDILLMPSRFEPCGLNQLYAMQYGTVPVVHGTGGLRDTVENFNPFAEKGEQGTGWAFSPLTIEKMLWALRMAISTYREHKSSWEGLMKRGMSSDFTWDHAASQYEQIFEWAFMDQPYVM.

The transit peptide at M1 to A113 directs the protein to the chloroplast. Positions T62 to P96 are disordered. Residues S68–P87 show a composition bias toward pro residues. ADP-alpha-D-glucose is bound at residue K147.

The protein belongs to the glycosyltransferase 1 family. Bacterial/plant glycogen synthase subfamily.

Its subcellular location is the plastid. The protein resides in the chloroplast. It is found in the amyloplast. The enzyme catalyses [(1-&gt;4)-alpha-D-glucosyl](n) + ADP-alpha-D-glucose = [(1-&gt;4)-alpha-D-glucosyl](n+1) + ADP + H(+). It functions in the pathway glycan biosynthesis; starch biosynthesis. The chain is Soluble starch synthase 1, chloroplastic/amyloplastic from Oryza sativa subsp. indica (Rice).